A 264-amino-acid polypeptide reads, in one-letter code: Thymidylate synthase (264 aa).

Arg-21 is a binding site for dUMP. His-51 is a (6R)-5,10-methylene-5,6,7,8-tetrahydrofolate binding site. 126-127 (RR) serves as a coordination point for dUMP. Cys-146 functions as the Nucleophile in the catalytic mechanism. DUMP contacts are provided by residues 166–169 (RSCD), Asn-177, and 207–209 (HLY). Asp-169 is a (6R)-5,10-methylene-5,6,7,8-tetrahydrofolate binding site. (6R)-5,10-methylene-5,6,7,8-tetrahydrofolate is bound at residue Ala-263.

Belongs to the thymidylate synthase family. Bacterial-type ThyA subfamily. In terms of assembly, homodimer.

It localises to the cytoplasm. It catalyses the reaction dUMP + (6R)-5,10-methylene-5,6,7,8-tetrahydrofolate = 7,8-dihydrofolate + dTMP. It functions in the pathway pyrimidine metabolism; dTTP biosynthesis. In terms of biological role, catalyzes the reductive methylation of 2'-deoxyuridine-5'-monophosphate (dUMP) to 2'-deoxythymidine-5'-monophosphate (dTMP) while utilizing 5,10-methylenetetrahydrofolate (mTHF) as the methyl donor and reductant in the reaction, yielding dihydrofolate (DHF) as a by-product. This enzymatic reaction provides an intracellular de novo source of dTMP, an essential precursor for DNA biosynthesis. This is Thymidylate synthase from Photorhabdus laumondii subsp. laumondii (strain DSM 15139 / CIP 105565 / TT01) (Photorhabdus luminescens subsp. laumondii).